The following is a 421-amino-acid chain: Tyrosine-protein phosphatase non-receptor type 20 (421 aa).

The disordered stretch occupies residues 1 to 58 (MSSPGNVRQKHGRDNDEHEGDSDDLNLQKSLPSSSQQKTPTKPVFGNKVNSESVKTSH). A compositionally biased stretch (low complexity) spans 27 to 41 (LQKSLPSSSQQKTPT). Over residues 48-58 (KVNSESVKTSH) the composition is skewed to polar residues. The residue at position 76 (serine 76) is a Phosphoserine. The interval 93 to 116 (RWSSVDPESAGPSKTVSTVLSESS) is disordered. The span at 104–116 (PSKTVSTVLSESS) shows a compositional bias: polar residues. Serine 122 carries the post-translational modification Phosphoserine. A Tyrosine-protein phosphatase domain is found at 160-413 (IIREFLELEE…QFCYEIVLEV (254 aa)). Substrate-binding positions include aspartate 324, 354 to 360 (CSAGVGR), and glutamine 398. The active-site Phosphocysteine intermediate is the cysteine 354.

This sequence belongs to the protein-tyrosine phosphatase family. Non-receptor class subfamily.

Its subcellular location is the nucleus. The protein resides in the cytoplasm. It localises to the cytoskeleton. It is found in the microtubule organizing center. The protein localises to the centrosome. It carries out the reaction O-phospho-L-tyrosyl-[protein] + H2O = L-tyrosyl-[protein] + phosphate. Tyrosine-protein phosphatase targeted to sites of actin polymerization in response of varied extracellular stimuli. Has tyrosine phosphatase activity towards various tyrosyl phosphorylated substrates. The sequence is that of Tyrosine-protein phosphatase non-receptor type 20 (Ptpn20) from Rattus norvegicus (Rat).